The following is a 384-amino-acid chain: S-adenosylmethionine synthase (384 aa).

Residue His15 participates in ATP binding. A Mg(2+)-binding site is contributed by Asp17. Residue Glu43 participates in K(+) binding. Residues Glu56 and Gln99 each coordinate L-methionine. The segment at Gln99–Arg109 is flexible loop. Residues Asp164–Lys166, Arg230–Phe231, Asp239, Arg245–Lys246, Ala262, and Lys266 each bind ATP. An L-methionine-binding site is contributed by Asp239. Lys270 provides a ligand contact to L-methionine.

This sequence belongs to the AdoMet synthase family. Homotetramer; dimer of dimers. It depends on Mg(2+) as a cofactor. The cofactor is K(+).

The protein localises to the cytoplasm. It carries out the reaction L-methionine + ATP + H2O = S-adenosyl-L-methionine + phosphate + diphosphate. The protein operates within amino-acid biosynthesis; S-adenosyl-L-methionine biosynthesis; S-adenosyl-L-methionine from L-methionine: step 1/1. In terms of biological role, catalyzes the formation of S-adenosylmethionine (AdoMet) from methionine and ATP. The overall synthetic reaction is composed of two sequential steps, AdoMet formation and the subsequent tripolyphosphate hydrolysis which occurs prior to release of AdoMet from the enzyme. The sequence is that of S-adenosylmethionine synthase from Photobacterium profundum (strain SS9).